A 34-amino-acid chain; its full sequence is Photosystem II reaction center protein M (34 aa).

Residues 5-25 (ILAFIATALFILVPTAFLLII) form a helical membrane-spanning segment.

It belongs to the PsbM family. PSII is composed of 1 copy each of membrane proteins PsbA, PsbB, PsbC, PsbD, PsbE, PsbF, PsbH, PsbI, PsbJ, PsbK, PsbL, PsbM, PsbT, PsbX, PsbY, PsbZ, Psb30/Ycf12, at least 3 peripheral proteins of the oxygen-evolving complex and a large number of cofactors. It forms dimeric complexes.

It localises to the plastid. The protein localises to the chloroplast thylakoid membrane. Its function is as follows. One of the components of the core complex of photosystem II (PSII). PSII is a light-driven water:plastoquinone oxidoreductase that uses light energy to abstract electrons from H(2)O, generating O(2) and a proton gradient subsequently used for ATP formation. It consists of a core antenna complex that captures photons, and an electron transfer chain that converts photonic excitation into a charge separation. This subunit is found at the monomer-monomer interface. The sequence is that of Photosystem II reaction center protein M from Phaseolus vulgaris (Kidney bean).